Reading from the N-terminus, the 617-residue chain is Estrogen receptor (617 aa).

The disordered stretch occupies residues 1–54 (MSEEQARAEAPAGARQRRRSELEGYSVSLASLKLSPMYPEEEQRTTGGISSTAH). Residues 1–186 (MSEEQARAEA…AIGLVKEIRY (186 aa)) form a modulating region. NR C4-type zinc fingers lie at residues 187 to 207 (CSVC…CEGC) and 223 to 247 (CPAT…LRKC). The segment at residues 187-252 (CSVCSDYASG…RLRKCYEVGM (66 aa)) is a DNA-binding region (nuclear receptor). A hinge region spans residues 253 to 315 (MKGGFRKERG…GGGVADVVCM (63 aa)). Positions 269 to 303 (NRRPSGLKERERGYSKAQSGSDVREALPQDGQSSS) are disordered. The NR LBD domain occupies 316-552 (SPEQVLLLLL…DLLLEMLDAH (237 aa)). The tract at residues 568–617 (VSSSPTTTATTPTTNTTTTTTTTTHHPSNGSTCPADLPSNPPGPGQSPSP) is disordered. A compositionally biased stretch (low complexity) spans 573-591 (TTTATTPTTNTTTTTTTTT). Over residues 606-617 (SNPPGPGQSPSP) the composition is skewed to pro residues.

The protein belongs to the nuclear hormone receptor family. NR3 subfamily. As to quaternary structure, binds DNA as a homodimer. Can form a heterodimer with ER-beta. Ovary and testis.

The protein resides in the nucleus. Functionally, the steroid hormones and their receptors are involved in the regulation of eukaryotic gene expression and affect cellular proliferation and differentiation in target tissues. The chain is Estrogen receptor (esr1) from Ictalurus punctatus (Channel catfish).